A 724-amino-acid chain; its full sequence is MKKMNLVTAALPYVNNIPHLGNLVQVLSADAFARYSKMSGIETLYICGTDEYGTATETKALIEKTSPLELCNKYYKIHKSIYKWFNIEFDIFGRTTNKHHQDIVQNFFLKLEKNGYIKERETEQFFCNKDSIFLADRYVIGECPECQSIAKGDQCENCSKLLNPIDLINPKCIICKNKPVLKKTNHLYIDLPKIKRKLEKWIKNSTTSKNWNTNALKMTNAFLRDGLKERAITRDLKWGIPVPKKGYENKVFYVWFDAPIGYISITKNLVKNWESWWKNNEQVNLVQFIGKDNILFHTVIFPSIEIGSKENWTILNQLSSSEYLNYENLKFSKSEGTGIFGNDVITTGIPSDVWRFYIYYNRPEKSDFQFMWQDLMERVNTELIDNFSNLVNRVLTFQKKFFGDVIETIEIQNKFWKQIIPKYNKILNLFKKTELKSALKEILKISSLGNKIFQDNEPWKRKDSSPQETKELISNLIYLIRDLSILMMPFIPETSKKIQQFFGNSYQFSTKILGTKSGIKRIEFTEILFNKLEQKKINNLKLKYSGEKNMEEKEQPENLFREKVLLKVVKINKIERNPEAKNLFILKLDDGTNENKQIVSSLEGYYTEKELLGKHIIIVDNLKPAKFRGIKSEGMLIAAEDKNKNFKIIIVEDSIKNPIPGERIILENDQNKDLICPPKIDINKFSKANIVAKDGELKINGINLILEHSKNKILSKDIPNGIVC.

The short motif at 12-22 (PYVNNIPHLGN) is the 'HIGH' region element. Positions 143, 146, 155, and 158 each coordinate Zn(2+). Positions 330–334 (KFSKS) match the 'KMSKS' region motif. Residue K333 coordinates ATP. The region spanning 560-665 (FREKVLLKVV…KNPIPGERII (106 aa)) is the tRNA-binding domain.

Belongs to the class-I aminoacyl-tRNA synthetase family. MetG type 1 subfamily. As to quaternary structure, homodimer. Requires Zn(2+) as cofactor.

It localises to the cytoplasm. The catalysed reaction is tRNA(Met) + L-methionine + ATP = L-methionyl-tRNA(Met) + AMP + diphosphate. Its function is as follows. Is required not only for elongation of protein synthesis but also for the initiation of all mRNA translation through initiator tRNA(fMet) aminoacylation. In Borrelia garinii subsp. bavariensis (strain ATCC BAA-2496 / DSM 23469 / PBi) (Borreliella bavariensis), this protein is Methionine--tRNA ligase.